A 421-amino-acid chain; its full sequence is Histidine--tRNA ligase (421 aa).

The protein belongs to the class-II aminoacyl-tRNA synthetase family. In terms of assembly, homodimer.

It is found in the cytoplasm. It catalyses the reaction tRNA(His) + L-histidine + ATP = L-histidyl-tRNA(His) + AMP + diphosphate + H(+). The protein is Histidine--tRNA ligase of Francisella tularensis subsp. holarctica (strain OSU18).